The chain runs to 275 residues: Membrane protein insertase YidC 1 (275 aa).

The N-terminal stretch at 1 to 25 (MRKVLRVKKNIKIARIVPLVLLLVA) is a signal peptide. Cys26 carries N-palmitoyl cysteine lipidation. A lipid anchor (S-diacylglycerol cysteine) is attached at Cys26. The next 5 membrane-spanning stretches (helical) occupy residues 58–78 (SIGVGIILFTLTIRLMLMPLF), 129–149 (YASLLPLLIQMPVMIALFQAL), 171–191 (LYLLPVLAAVFTFLSTWLTNL), 198–216 (VMMTVMIYVMPLMIFFMGF), and 222–240 (VVLYWTVSNAFQVVQLLLL).

This sequence belongs to the OXA1/ALB3/YidC family. Type 2 subfamily.

The protein localises to the cell membrane. In terms of biological role, required for the insertion and/or proper folding and/or complex formation of integral membrane proteins into the membrane. Involved in integration of membrane proteins that insert both dependently and independently of the Sec translocase complex, as well as at least some lipoproteins. The chain is Membrane protein insertase YidC 1 from Streptococcus pyogenes serotype M6 (strain ATCC BAA-946 / MGAS10394).